The sequence spans 195 residues: Probable molybdenum cofactor guanylyltransferase (195 aa).

GTP-binding positions include 8–10, Lys-20, Asp-65, and Asp-96; that span reads LSG. Asp-96 contacts Mg(2+).

The protein belongs to the MobA family. Mg(2+) is required as a cofactor.

The protein localises to the cytoplasm. It carries out the reaction Mo-molybdopterin + GTP + H(+) = Mo-molybdopterin guanine dinucleotide + diphosphate. Functionally, transfers a GMP moiety from GTP to Mo-molybdopterin (Mo-MPT) cofactor (Moco or molybdenum cofactor) to form Mo-molybdopterin guanine dinucleotide (Mo-MGD) cofactor. This Bacillus licheniformis (strain ATCC 14580 / DSM 13 / JCM 2505 / CCUG 7422 / NBRC 12200 / NCIMB 9375 / NCTC 10341 / NRRL NRS-1264 / Gibson 46) protein is Probable molybdenum cofactor guanylyltransferase.